An 805-amino-acid polypeptide reads, in one-letter code: MTERRLTRIHSIKERLGDSLSHHPNELLALFSRFIKQGKGMLERHQLLTEYESVIPEADREKLKDGVFEDTLRASQEAIVIPPWVALAIRPRPGVWEYVRVNVNELAVEECSEYLKFKEDLVDRSSQSNFVLEMDFEPFNANVPRPSLSKSIGNGVQFLNRHLSSKLFHDKESLYPLLNFLREHNYKGTTLMLNDRLQSLSALQTALRKADRYLLSISKDTPYSEFNHSFQVLGLEKGWGDTASRVSENIHLLLDLLEAPDPSTLEKFLGTIPMVFNVVILSPHGYFAQANVLGYPDTGGQVVYILDQVRALETEMLLKIKQQGLDITPRILIVTRLLPDAVGTTCGQRLERVLGTEHTHILRVPFRTDKGILRKWISRFEVWPYLETYAEDVAHELAGEMQATPDLIIGNYSDGNLVASLLAHRLGITQCTIAHALEKTKYPNSDIYLKKFDDQYHFSCQFTADLIAMNQSDFIITSTFQEIAGSKDTVGQYESHTAFTLPGLYRVVHGIDVFDPKFNIVSPGADMSIYYPYFEQEKRLTALHAEIEELLYSSVENEEHKFVLKDRNKPIIFSMARLDRVKNMTGLVELYGKNDRLKELVNLVVVAGDHGKESKDLEEQAELKKMYKLIEEYKLQGHIRWISAQMNRVRNGELYRYIADTKGAFVQPAFYEAFGLTVVESMTCGLPTFATCHGGPAEIIVHGVSGFHIDPYHGDKASEQLVSFFEKCKEDPAHWEKISQGGLQRIYEKYTWKLYSERLMTLAGVYGFWKYVSNLDRRETRRYLEMFYALKYRNLAKSVPLAIDN.

The segment at 274–751 (MVFNVVILSP…GLQRIYEKYT (478 aa)) is GT-B glycosyltransferase.

The protein belongs to the glycosyltransferase 1 family. Plant sucrose synthase subfamily.

It carries out the reaction an NDP-alpha-D-glucose + D-fructose = a ribonucleoside 5'-diphosphate + sucrose + H(+). Functionally, sucrose-cleaving enzyme that provides UDP-glucose and fructose for various metabolic pathways. The polypeptide is Sucrose synthase 1 (Tulipa gesneriana (Garden tulip)).